An 855-amino-acid polypeptide reads, in one-letter code: DNA mismatch repair protein MutS (855 aa).

615-622 (GPNMGGKS) provides a ligand contact to ATP.

This sequence belongs to the DNA mismatch repair MutS family.

Its function is as follows. This protein is involved in the repair of mismatches in DNA. It is possible that it carries out the mismatch recognition step. This protein has a weak ATPase activity. In Aliivibrio salmonicida (strain LFI1238) (Vibrio salmonicida (strain LFI1238)), this protein is DNA mismatch repair protein MutS.